The following is a 140-amino-acid chain: Small ribosomal subunit protein uS12 (140 aa).

Asp102 carries the 3-methylthioaspartic acid modification.

The protein belongs to the universal ribosomal protein uS12 family. Part of the 30S ribosomal subunit. Contacts proteins S8 and S17. May interact with IF1 in the 30S initiation complex.

Functionally, with S4 and S5 plays an important role in translational accuracy. Its function is as follows. Interacts with and stabilizes bases of the 16S rRNA that are involved in tRNA selection in the A site and with the mRNA backbone. Located at the interface of the 30S and 50S subunits, it traverses the body of the 30S subunit contacting proteins on the other side and probably holding the rRNA structure together. The combined cluster of proteins S8, S12 and S17 appears to hold together the shoulder and platform of the 30S subunit. The chain is Small ribosomal subunit protein uS12 from Geobacillus stearothermophilus (Bacillus stearothermophilus).